We begin with the raw amino-acid sequence, 453 residues long: UDP-N-acetylmuramoylalanine--D-glutamate ligase (453 aa).

An ATP-binding site is contributed by G115–T121.

Belongs to the MurCDEF family.

The protein localises to the cytoplasm. It carries out the reaction UDP-N-acetyl-alpha-D-muramoyl-L-alanine + D-glutamate + ATP = UDP-N-acetyl-alpha-D-muramoyl-L-alanyl-D-glutamate + ADP + phosphate + H(+). It functions in the pathway cell wall biogenesis; peptidoglycan biosynthesis. Its function is as follows. Cell wall formation. Catalyzes the addition of glutamate to the nucleotide precursor UDP-N-acetylmuramoyl-L-alanine (UMA). This is UDP-N-acetylmuramoylalanine--D-glutamate ligase from Geotalea uraniireducens (strain Rf4) (Geobacter uraniireducens).